The sequence spans 309 residues: Vomeronasal type-1 receptor 46 (309 aa).

Residues 1-20 (MNKANIFCTDTNMKVILFSE) lie on the Extracellular side of the membrane. A helical membrane pass occupies residues 21–41 (VSVGISANSILFISHLCMFLG). The Cytoplasmic segment spans residues 42-50 (ESRPKPIDL). A helical membrane pass occupies residues 51–71 (YIAFFSLTHLMLLVTMGLIAV). The Extracellular segment spans residues 72 to 85 (DMFMPGGRWDSTTC). Cys85 and Cys171 are joined by a disulfide. A helical membrane pass occupies residues 86–106 (TFLMYLHIVLRGPTLCATCLL). Topologically, residues 107 to 134 (NVLWTITLSPRNSCLTKFKHKSPHHISG) are cytoplasmic. The chain crosses the membrane as a helical span at residues 135 to 155 (AFLFLCVLYMSLSSELLSITA). At 156 to 192 (SLNLTSENFLYVSQSCSILPMSYSIKSMFSTKMAIRE) the chain is on the extracellular side. An N-linked (GlcNAc...) asparagine glycan is attached at Asn158. A helical transmembrane segment spans residues 193-213 (AFLIGLMVLSSGYMVALLWSH). Residues 214 to 237 (KKQAQHLHSNSLSLKASPEQRATR) lie on the Cytoplasmic side of the membrane. Residues 238-258 (TIMLLMSFFVVFYILDSVIFY) form a helical membrane-spanning segment. Residues 259 to 267 (SRMKFKDDS) are Extracellular-facing. Residues 268-288 (IFVCVQIIVSHSYVTVSPFVF) form a helical membrane-spanning segment. Over 289–309 (ICTEKHIIKFFWSLCGRIVNI) the chain is Cytoplasmic.

It belongs to the G-protein coupled receptor 1 family.

The protein localises to the cell membrane. In terms of biological role, putative pheromone receptor implicated in the regulation of social and reproductive behavior. This Mus musculus (Mouse) protein is Vomeronasal type-1 receptor 46 (Vmn1r46).